Consider the following 668-residue polypeptide: Fructose-1,6-bisphosphatase class 3 (668 aa).

This sequence belongs to the FBPase class 3 family. The cofactor is Mn(2+).

The catalysed reaction is beta-D-fructose 1,6-bisphosphate + H2O = beta-D-fructose 6-phosphate + phosphate. Its pathway is carbohydrate biosynthesis; gluconeogenesis. The protein is Fructose-1,6-bisphosphatase class 3 of Clostridium botulinum (strain Kyoto / Type A2).